The chain runs to 302 residues: ATP synthase subunit b 1 (302 aa).

The helical transmembrane segment at 5-22 (WFTVIAQGINFLLLLWLL) threads the bilayer. The interval 278–302 (GLPENEGTDNPEANPPHAEAKIPHA) is disordered.

Belongs to the ATPase B chain family. F-type ATPases have 2 components, F(1) - the catalytic core - and F(0) - the membrane proton channel. F(1) has five subunits: alpha(3), beta(3), gamma(1), delta(1), epsilon(1). F(0) has three main subunits: a(1), b(2) and c(10-14). The alpha and beta chains form an alternating ring which encloses part of the gamma chain. F(1) is attached to F(0) by a central stalk formed by the gamma and epsilon chains, while a peripheral stalk is formed by the delta and b chains.

Its subcellular location is the cell inner membrane. In terms of biological role, f(1)F(0) ATP synthase produces ATP from ADP in the presence of a proton or sodium gradient. F-type ATPases consist of two structural domains, F(1) containing the extramembraneous catalytic core and F(0) containing the membrane proton channel, linked together by a central stalk and a peripheral stalk. During catalysis, ATP synthesis in the catalytic domain of F(1) is coupled via a rotary mechanism of the central stalk subunits to proton translocation. Component of the F(0) channel, it forms part of the peripheral stalk, linking F(1) to F(0). In Pseudoalteromonas atlantica (strain T6c / ATCC BAA-1087), this protein is ATP synthase subunit b 1.